Reading from the N-terminus, the 126-residue chain is Probable S-adenosyl-L-methionine-binding protein MJ1583 (126 aa).

Residues 4-126 (LKPIGVVEQN…FSEKLDCPKI (123 aa)) form the TsaA-like domain. S-adenosyl-L-methionine-binding positions include 45 to 46 (HK), Arg75, and 106 to 109 (YNET).

The protein belongs to the tRNA methyltransferase O family.

The protein is Probable S-adenosyl-L-methionine-binding protein MJ1583 of Methanocaldococcus jannaschii (strain ATCC 43067 / DSM 2661 / JAL-1 / JCM 10045 / NBRC 100440) (Methanococcus jannaschii).